A 98-amino-acid chain; its full sequence is NADH-ubiquinone oxidoreductase chain 4L (98 aa).

The next 3 helical transmembrane spans lie at 1-21 (MPSISTNIILAFTTALLGTLI), 26-46 (LMSSLLCLEGMMLSMFILTSL), and 61-81 (IILLVFAACEAAIGLALLVMV).

The protein belongs to the complex I subunit 4L family. As to quaternary structure, core subunit of respiratory chain NADH dehydrogenase (Complex I) which is composed of 45 different subunits.

The protein localises to the mitochondrion inner membrane. It catalyses the reaction a ubiquinone + NADH + 5 H(+)(in) = a ubiquinol + NAD(+) + 4 H(+)(out). Functionally, core subunit of the mitochondrial membrane respiratory chain NADH dehydrogenase (Complex I) which catalyzes electron transfer from NADH through the respiratory chain, using ubiquinone as an electron acceptor. Part of the enzyme membrane arm which is embedded in the lipid bilayer and involved in proton translocation. The protein is NADH-ubiquinone oxidoreductase chain 4L (MT-ND4L) of Otolemur crassicaudatus (Brown greater galago).